Here is a 457-residue protein sequence, read N- to C-terminus: Adenylosuccinate synthetase isozyme 1 (457 aa).

A disordered region spans residues 1-24 (MSGTRASNDRPPGTGGVKRGRLQQ). GTP contacts are provided by residues 42–48 (GDEGKGK) and 70–72 (GHT). The Proton acceptor role is filled by Asp-43. Mg(2+) is bound by residues Asp-43 and Gly-70. Asp-43 contacts substrate. Residues 43–46 (DEGK), 68–71 (NAGH), Thr-163, Arg-177, Asn-256, Thr-271, and Arg-335 each bind IMP. His-71 functions as the Proton donor in the catalytic mechanism. A substrate-binding site is contributed by 331 to 337 (VTTGRKR). GTP contacts are provided by residues Arg-337, 363–365 (KLD), and 445–448 (GVGK).

Belongs to the adenylosuccinate synthetase family. Homodimer. The cofactor is Mg(2+). As to expression, high levels in muscle.

The protein localises to the cytoplasm. It localises to the membrane. The enzyme catalyses IMP + L-aspartate + GTP = N(6)-(1,2-dicarboxyethyl)-AMP + GDP + phosphate + 2 H(+). It functions in the pathway purine metabolism; AMP biosynthesis via de novo pathway; AMP from IMP: step 1/2. Weakly inhibited by AMP non-competitively to all substrates. Inhibited by IMP non-competitively with respect to GTP. Inhibited by fructose 1,6-bisphosphate competitively with respect to IMP. Component of the purine nucleotide cycle (PNC), which interconverts IMP and AMP to regulate the nucleotide levels in various tissues, and which contributes to glycolysis and ammoniagenesis. Catalyzes the first committed step in the biosynthesis of AMP from IMP. The sequence is that of Adenylosuccinate synthetase isozyme 1 (Adss1) from Mus musculus (Mouse).